An 86-amino-acid chain; its full sequence is Small ribosomal subunit protein bS20 (86 aa).

It belongs to the bacterial ribosomal protein bS20 family.

In terms of biological role, binds directly to 16S ribosomal RNA. In Mycolicibacterium vanbaalenii (strain DSM 7251 / JCM 13017 / BCRC 16820 / KCTC 9966 / NRRL B-24157 / PYR-1) (Mycobacterium vanbaalenii), this protein is Small ribosomal subunit protein bS20.